Consider the following 259-residue polypeptide: Phospholipase YtpA (259 aa).

The active-site Nucleophile is the serine 88. Catalysis depends on charge relay system residues aspartate 206 and histidine 236.

This sequence belongs to the AB hydrolase superfamily.

Its pathway is antibiotic biosynthesis; bacilysocin biosynthesis. Its function is as follows. Phospholipase involved in the biosynthesis of the antibiotic bacilysocin. It probably catalyzes the hydrolysis of the 2-sn-acyl moiety of phosphatidylglycerol to produce bacilysocin (lysophosphatidylglycerol). Is also able to catalyze the hydrolysis reaction of one acyl bond in phosphatidylcholine in vitro (actual cleavage point is unknown), resulting in lysophosphatidylcholine. This chain is Phospholipase YtpA (ytpA), found in Bacillus subtilis (strain 168).